Here is a 685-residue protein sequence, read N- to C-terminus: MSTDIKFAITGVPTPPSSNGAVPLRRELRDLQQNYPEQFNLYLLGLRDFQGLDEAKLDSYYQVAGIHGMPFKPWAGVPSDTDWSQPGSSGFGGYCTHSSILFITWHRPYLALYEQALYASVQAVAQKFPVEGGLRAKYVAAAKDFRAPYFDWASQPPKGTLAFPESLSSRTIQVVDVDGKTKSINNPLHRFTFHPVNPSPGDFSAAWSRYPSTVRYPNRLTGASRDERIAPILANELASLRNNVSLLLLSYKDFDAFSYNRWDPNTNPGDFGSLEDVHNEIHDRTGGNGHMSSLEVSAFDPLFWLHHVNVDRLWSIWQDLNPNSFMTPRPAPYSTFVAQEGESQSKSTPLEPFWDKSAANFWTSEQVKDSITFGYAYPETQKWKYSSVKEYQAAIRKSVTALYGSNVFANFVENVADRTPALKKPQATGEESKSTVSAAAAHAVELSGAKKVAEKVHNVFQHAEEKAQKPVVPVKDTKAESSTAAGMMIGLSIKRPSKLTASPGPIPESLKYLAPDGKYTDWIVNVRAQKHGLGQSFRVIVFLGEFNPDPETWDDEFNCVGRVSVLGRSAETQCGKCRKDNANGLIVSGTVPLTSALLQDIVGGELQSLKPEDVIPHLRANLKWKVALFNGDEYNLEEVPDLKVSVASTEVTIDEEGLPHYSRQYTVYPEITEGKPCGHGPEDHI.

Ser-2 carries the N-acetylserine modification. His-67, His-97, His-106, His-278, His-282, and His-307 together coordinate Cu cation. Positions 95 to 97 (CTH) form a cross-link, 2'-(S-cysteinyl)-histidine (Cys-His). Positions 409 to 685 (ANFVENVADR…PCGHGPEDHI (277 aa)) are cleaved as a propeptide — could be involved in enzyme activation.

The protein belongs to the tyrosinase family. Cu(2+) is required as a cofactor.

It carries out the reaction 2 L-dopa + O2 = 2 L-dopaquinone + 2 H2O. The enzyme catalyses L-tyrosine + O2 = L-dopaquinone + H2O. Its function is as follows. This is a copper-containing oxidase that functions in the formation of pigments such as melanins and other polyphenolic compounds. The protein is Tyrosinase (T) of Neurospora crassa (strain ATCC 24698 / 74-OR23-1A / CBS 708.71 / DSM 1257 / FGSC 987).